A 183-amino-acid polypeptide reads, in one-letter code: Transmembrane protein 154 (183 aa).

The N-terminal stretch at 1 to 22 (MQAPRAALVFALVIALVPVGRG) is a signal peptide. Over 23–75 (NYEELENSGDTTVESERPNKVTIPSTFAAVTIKETLNANINSTNFAPDENQLE) the chain is Extracellular. The helical transmembrane segment at 76–96 (FILMVLIPLILLVLLLLSVVF) threads the bilayer. Residues 97–183 (LATYYKRKRT…SNHNPSDSES (87 aa)) are Cytoplasmic-facing. Residues 163–183 (ECLPTLKEEKESNHNPSDSES) are disordered. Phosphoserine is present on serine 179.

The protein resides in the membrane. This Homo sapiens (Human) protein is Transmembrane protein 154 (TMEM154).